Consider the following 243-residue polypeptide: 1-(5-phosphoribosyl)-5-[(5-phosphoribosylamino)methylideneamino] imidazole-4-carboxamide isomerase (243 aa).

The active-site Proton acceptor is D8. The active-site Proton donor is D129.

It belongs to the HisA/HisF family.

The protein resides in the cytoplasm. The catalysed reaction is 1-(5-phospho-beta-D-ribosyl)-5-[(5-phospho-beta-D-ribosylamino)methylideneamino]imidazole-4-carboxamide = 5-[(5-phospho-1-deoxy-D-ribulos-1-ylimino)methylamino]-1-(5-phospho-beta-D-ribosyl)imidazole-4-carboxamide. The protein operates within amino-acid biosynthesis; L-histidine biosynthesis; L-histidine from 5-phospho-alpha-D-ribose 1-diphosphate: step 4/9. This chain is 1-(5-phosphoribosyl)-5-[(5-phosphoribosylamino)methylideneamino] imidazole-4-carboxamide isomerase, found in Citrifermentans bemidjiense (strain ATCC BAA-1014 / DSM 16622 / JCM 12645 / Bem) (Geobacter bemidjiensis).